We begin with the raw amino-acid sequence, 487 residues long: uncharacterized protein (487 aa).

2 ABC transporter domains span residues 5–249 and 265–487; these read VKFA…IPVK and ISME…VIHA. 297-304 contacts ATP; that stretch reads GSNGSGKT.

Belongs to the ABC transporter superfamily.

It localises to the mitochondrion. This is an uncharacterized protein from Schizosaccharomyces pombe (strain 972 / ATCC 24843) (Fission yeast).